We begin with the raw amino-acid sequence, 486 residues long: N-succinylglutamate 5-semialdehyde dehydrogenase (486 aa).

G221 to G226 lines the NAD(+) pocket. Catalysis depends on residues E244 and C278.

Belongs to the aldehyde dehydrogenase family. AstD subfamily.

It carries out the reaction N-succinyl-L-glutamate 5-semialdehyde + NAD(+) + H2O = N-succinyl-L-glutamate + NADH + 2 H(+). It functions in the pathway amino-acid degradation; L-arginine degradation via AST pathway; L-glutamate and succinate from L-arginine: step 4/5. Functionally, catalyzes the NAD-dependent reduction of succinylglutamate semialdehyde into succinylglutamate. The protein is N-succinylglutamate 5-semialdehyde dehydrogenase of Chromobacterium violaceum (strain ATCC 12472 / DSM 30191 / JCM 1249 / CCUG 213 / NBRC 12614 / NCIMB 9131 / NCTC 9757 / MK).